The primary structure comprises 634 residues: tRNA uridine 5-carboxymethylaminomethyl modification enzyme MnmG (634 aa).

14–19 (GGGHAG) is a binding site for FAD. 279–293 (GPRYCPSIEDKVVRF) serves as a coordination point for NAD(+).

This sequence belongs to the MnmG family. In terms of assembly, homodimer. Heterotetramer of two MnmE and two MnmG subunits. FAD serves as cofactor.

The protein resides in the cytoplasm. Its function is as follows. NAD-binding protein involved in the addition of a carboxymethylaminomethyl (cmnm) group at the wobble position (U34) of certain tRNAs, forming tRNA-cmnm(5)s(2)U34. This is tRNA uridine 5-carboxymethylaminomethyl modification enzyme MnmG from Xanthomonas campestris pv. campestris (strain 8004).